Here is a 161-residue protein sequence, read N- to C-terminus: 2-C-methyl-D-erythritol 2,4-cyclodiphosphate synthase (161 aa).

Positions 10 and 12 each coordinate a divalent metal cation. Residues 10-12 (DVH) and 36-37 (HS) contribute to the 4-CDP-2-C-methyl-D-erythritol 2-phosphate site. Histidine 44 serves as a coordination point for a divalent metal cation. 4-CDP-2-C-methyl-D-erythritol 2-phosphate-binding positions include 58-60 (DIG), 63-67 (FSDTD), and arginine 144.

It belongs to the IspF family. As to quaternary structure, homotrimer. A divalent metal cation is required as a cofactor.

It catalyses the reaction 4-CDP-2-C-methyl-D-erythritol 2-phosphate = 2-C-methyl-D-erythritol 2,4-cyclic diphosphate + CMP. It participates in isoprenoid biosynthesis; isopentenyl diphosphate biosynthesis via DXP pathway; isopentenyl diphosphate from 1-deoxy-D-xylulose 5-phosphate: step 4/6. Its function is as follows. Involved in the biosynthesis of isopentenyl diphosphate (IPP) and dimethylallyl diphosphate (DMAPP), two major building blocks of isoprenoid compounds. Catalyzes the conversion of 4-diphosphocytidyl-2-C-methyl-D-erythritol 2-phosphate (CDP-ME2P) to 2-C-methyl-D-erythritol 2,4-cyclodiphosphate (ME-CPP) with a corresponding release of cytidine 5-monophosphate (CMP). This is 2-C-methyl-D-erythritol 2,4-cyclodiphosphate synthase from Burkholderia cenocepacia (strain HI2424).